Consider the following 370-residue polypeptide: Flagellar P-ring protein (370 aa).

Residues 1-28 (MTFFTRCFRRGALLFLLAVLLLPSPAQA) form the signal peptide.

It belongs to the FlgI family. In terms of assembly, the basal body constitutes a major portion of the flagellar organelle and consists of four rings (L,P,S, and M) mounted on a central rod.

It is found in the periplasm. The protein resides in the bacterial flagellum basal body. Functionally, assembles around the rod to form the L-ring and probably protects the motor/basal body from shearing forces during rotation. The chain is Flagellar P-ring protein from Oleidesulfovibrio alaskensis (strain ATCC BAA-1058 / DSM 17464 / G20) (Desulfovibrio alaskensis).